The sequence spans 258 residues: Casein kinase II subunit beta' (258 aa).

The segment covering 1–10 (MGSRSENVGT) has biased composition (polar residues). Residues 1–29 (MGSRSENVGTVTREGSRVEQDDVLMDDDS) are disordered.

The protein belongs to the casein kinase 2 subunit beta family. As to quaternary structure, tetramer composed of an alpha subunit, an alpha' subunit, one beta subunit and one beta' subunit. Interacts with FACT subunits POB3 and SPT16. Interaction with YTA7. Post-translationally, phosphorylated by alpha subunit. The N-terminus is blocked.

Its function is as follows. Regulatory subunit of casein kinase II/CK2. As part of the kinase complex regulates the basal catalytic activity of the alpha subunit a constitutively active serine/threonine-protein kinase that phosphorylates a large number of substrates containing acidic residues C-terminal to the phosphorylated serine or threonine. In Saccharomyces cerevisiae (strain ATCC 204508 / S288c) (Baker's yeast), this protein is Casein kinase II subunit beta'.